We begin with the raw amino-acid sequence, 72 residues long: DNA-directed RNA polymerase subunit omega (72 aa).

It belongs to the RNA polymerase subunit omega family. The RNAP catalytic core consists of 2 alpha, 1 beta, 1 beta' and 1 omega subunit. When a sigma factor is associated with the core the holoenzyme is formed, which can initiate transcription.

It carries out the reaction RNA(n) + a ribonucleoside 5'-triphosphate = RNA(n+1) + diphosphate. Promotes RNA polymerase assembly. Latches the N- and C-terminal regions of the beta' subunit thereby facilitating its interaction with the beta and alpha subunits. The polypeptide is DNA-directed RNA polymerase subunit omega (Francisella philomiragia subsp. philomiragia (strain ATCC 25017 / CCUG 19701 / FSC 153 / O#319-036)).